The sequence spans 471 residues: Type 2 glycosyltransferase (471 aa).

Residues 4–24 (ILGWFWAFVSAFVLRYLRTIV) traverse the membrane as a helical segment. Residues Asn29, Asn88, and Asn222 are each glycosylated (N-linked (GlcNAc...) asparagine). Helical transmembrane passes span 305 to 325 (CLQT…FYSL), 339 to 359 (MAFT…KLWG), and 368 to 388 (VIYI…KFWG). A glycan (N-linked (GlcNAc...) asparagine) is linked at Asn458.

This sequence belongs to the GT2 glycosyltransferase family.

The protein localises to the cell membrane. Glycosyltransferase involved in the maintenance of the outermost surface of the fungal cell wall. Likely functions in the synthesis of a currently unknown, potentially minor but widespread, extracellular or outer cell wall polysaccharide which plays a key role in facilitating many interactions between plants and fungi by enabling hyphal growth on solid matrices. The polypeptide is Type 2 glycosyltransferase (Zymoseptoria tritici (strain CBS 115943 / IPO323) (Speckled leaf blotch fungus)).